Consider the following 95-residue polypeptide: Large ribosomal subunit protein bL25 (95 aa).

This sequence belongs to the bacterial ribosomal protein bL25 family. In terms of assembly, part of the 50S ribosomal subunit; part of the 5S rRNA/L5/L18/L25 subcomplex. Contacts the 5S rRNA. Binds to the 5S rRNA independently of L5 and L18.

This is one of the proteins that binds to the 5S RNA in the ribosome where it forms part of the central protuberance. The polypeptide is Large ribosomal subunit protein bL25 (Haemophilus ducreyi (strain 35000HP / ATCC 700724)).